Reading from the N-terminus, the 575-residue chain is Amyloid-beta A4 precursor protein-binding family A member 3 (575 aa).

M1 carries the post-translational modification N-acetylmethionine. The span at 1-10 (MDFPTISRSP) shows a compositional bias: polar residues. 2 disordered regions span residues 1–50 (MDFP…LSRM) and 118–211 (CEEC…GPCD). Residue S11 is modified to Phosphoserine. Over residues 143 to 153 (EDPDEDSDSPE) the composition is skewed to acidic residues. The span at 156-184 (EGASAEQEGSRSSSSSPEPWLETVPLVTP) shows a compositional bias: low complexity. S171 is modified (phosphoserine). A required for interaction with NECAB3 region spans residues 215 to 364 (LLDGVIFGAR…QFLRESGIDP (150 aa)). The PID domain maps to 217-381 (DGVIFGARYL…SPGACHLHNG (165 aa)). At S372 the chain carries Phosphoserine. 2 PDZ domains span residues 394–480 (EVHL…IVHC) and 485–560 (TAII…TMPA).

As to quaternary structure, binds to the cytoplasmic domain of amyloid protein (APP) in vivo. Interacts with HIF1AN (via N-terminus). Interacts with NECAB3; seems to mediate the interaction between NECAB3 and HIF1AN. As to expression, expressed in all tissues examined with lower levels in brain and testis.

It localises to the cytoplasm. The protein localises to the perinuclear region. May modulate processing of the amyloid-beta precursor protein (APP) and hence formation of APP-beta. May enhance the activity of HIF1A in macrophages by inhibiting the activity of HIF1AN. This is Amyloid-beta A4 precursor protein-binding family A member 3 (APBA3) from Homo sapiens (Human).